The primary structure comprises 2335 residues: Serine/threonine-protein kinase tor1 (2335 aa).

HEAT repeat units follow at residues 1-31 (MEYF…SSTK), 164-201 (LYIS…VVCQ), 331-371 (PYLQ…AVKL), 410-449 (PIQE…AREP), 474-512 (YSLI…RDPI), 522-560 (ESVA…RHLA), 562-596 (PDNI…YNPA), 642-679 (PYIQ…VEGE), 684-722 (DVRG…RSGY), 728-766 (LDYP…LDPY), 843-880 (VFLP…IIGP), 904-923 (LLVI…DEFK), 924-961 (FYLP…FGSN), 964-1003 (EYMH…SVNF), and 1005-1042 (DHAS…QLGY). Positions 1226 to 1781 (VISAHASKCN…VYSLTVSSKS (556 aa)) constitute an FAT domain. Residues 1955-2269 (FHHTFEVISS…ARHADYAALS (315 aa)) form the PI3K/PI4K catalytic domain. The interval 1961–1967 (VISSKQR) is G-loop. Thr-1972 is modified (phosphothreonine; by PKB/AKT1). Positions 2134 to 2142 (GLGDRHPSN) are catalytic loop. An activation loop region spans residues 2154–2179 (HIDFGDCFEVAMHREKFPEKIPFRLT). The region spanning 2303 to 2335 (EQLPVKAQVEKLIQQATAPENLCRCYVGWCSFW) is the FATC domain.

The protein belongs to the PI3/PI4-kinase family. As to quaternary structure, the target of rapamycin complex 2 (TORC2) is composed of at least bit61, pop3/wat1, sin1, ste20 and tor1. Phosphorylation at Thr-1972 in the ATP-binding region by AKT1 strongly reduces kinase activity.

Its subcellular location is the cytoplasm. It catalyses the reaction L-seryl-[protein] + ATP = O-phospho-L-seryl-[protein] + ADP + H(+). The catalysed reaction is L-threonyl-[protein] + ATP = O-phospho-L-threonyl-[protein] + ADP + H(+). Functionally, catalytic component of TORC2, which regulates multiple cellular processes to control cell growth in response to environmental signals. In response to signals, TORC2 phosphorylates AGC protein kinase family members. TORC2 is required for cell survival under various stress conditions. TORC2 positively controls G1 cell-cycle arrest, sexual development and amino acid uptake. Positively regulates amino acid uptake through the control of expression of amino acid permeases. Responsible for the phosphorylation of AGC kinase gad8 at 'Ser-527' and 'Ser-546', activating gad8 kinase activity and promoting sexual development. This chain is Serine/threonine-protein kinase tor1, found in Schizosaccharomyces pombe (strain 972 / ATCC 24843) (Fission yeast).